Reading from the N-terminus, the 400-residue chain is MTQFASPVLHSLLDTDAYKLHMQQAVFHHYYDVHVAAEFRCRGDDLLGIYADAIREQIQAMQHLRLQDDEYQWLSALPFFKADYLNWLREFRFNPEQVTVSNDNGKLDIRLSGPWREVILWEVPLLAVISEMVHRYRSPQADVAQALDTLESKLVDFSALTAGLDMSRFHLMDFGTRRRFSREVQETIVKRLQQESWFVGTSNYDLARRLSLTPMGTQAHEWFQAHQQISPDLANSQRAALAAWLEEYPDQLGIALTDCITMDAFLRDFGVEFASRYQGLRHDSGDPVEWGEKAIAHYKKLGIDPQSKTLVFSDNLDLRKAVELYRHFSSRVQLSFGIGTRLTCDIPQVKPLNIVIKLVECNGKPVAKLSDSPGKTICHDKAFVRALRKAFDLPHIKKAS.

At histidine 220 the chain carries Phosphohistidine; by autocatalysis.

The protein belongs to the NAPRTase family. Transiently phosphorylated on a His residue during the reaction cycle. Phosphorylation strongly increases the affinity for substrates and increases the rate of nicotinate D-ribonucleotide production. Dephosphorylation regenerates the low-affinity form of the enzyme, leading to product release.

The catalysed reaction is nicotinate + 5-phospho-alpha-D-ribose 1-diphosphate + ATP + H2O = nicotinate beta-D-ribonucleotide + ADP + phosphate + diphosphate. It functions in the pathway cofactor biosynthesis; NAD(+) biosynthesis; nicotinate D-ribonucleotide from nicotinate: step 1/1. In terms of biological role, catalyzes the synthesis of beta-nicotinate D-ribonucleotide from nicotinate and 5-phospho-D-ribose 1-phosphate at the expense of ATP. In Shigella boydii serotype 18 (strain CDC 3083-94 / BS512), this protein is Nicotinate phosphoribosyltransferase.